Here is a 420-residue protein sequence, read N- to C-terminus: UDP-N-acetylglucosamine 1-carboxyvinyltransferase (420 aa).

Position 22–23 (22–23 (KN)) interacts with phosphoenolpyruvate. R94 lines the UDP-N-acetyl-alpha-D-glucosamine pocket. C118 functions as the Proton donor in the catalytic mechanism. C118 carries the post-translational modification 2-(S-cysteinyl)pyruvic acid O-phosphothioketal. D307 and I329 together coordinate UDP-N-acetyl-alpha-D-glucosamine.

Belongs to the EPSP synthase family. MurA subfamily.

The protein localises to the cytoplasm. The enzyme catalyses phosphoenolpyruvate + UDP-N-acetyl-alpha-D-glucosamine = UDP-N-acetyl-3-O-(1-carboxyvinyl)-alpha-D-glucosamine + phosphate. Its pathway is cell wall biogenesis; peptidoglycan biosynthesis. Its function is as follows. Cell wall formation. Adds enolpyruvyl to UDP-N-acetylglucosamine. The chain is UDP-N-acetylglucosamine 1-carboxyvinyltransferase from Gluconacetobacter diazotrophicus (strain ATCC 49037 / DSM 5601 / CCUG 37298 / CIP 103539 / LMG 7603 / PAl5).